The chain runs to 151 residues: Large ribosomal subunit protein bL9 (151 aa).

It belongs to the bacterial ribosomal protein bL9 family.

Functionally, binds to the 23S rRNA. This chain is Large ribosomal subunit protein bL9, found in Chloroherpeton thalassium (strain ATCC 35110 / GB-78).